A 112-amino-acid polypeptide reads, in one-letter code: Nitrogen regulatory protein P-II (112 aa).

Tyr-51 carries the post-translational modification O-UMP-tyrosine.

The protein belongs to the P(II) protein family. Homotrimer. Post-translationally, uridylylated/deuridylylated by GlnD.

P-II indirectly controls the transcription of the glutamine synthetase gene (GlnA). P-II prevents NR-II-catalyzed conversion of NR-I to NR-I-phosphate, the transcriptional activator of GlnA. When P-II is uridylylated to P-II-UMP, these events are reversed. When the ratio of Gln to 2-ketoglutarate decreases, P-II is uridylylated to P-II-UMP, which causes the deadenylation of glutamine synthetase by GlnE, so activating the enzyme. In Haemophilus influenzae (strain ATCC 51907 / DSM 11121 / KW20 / Rd), this protein is Nitrogen regulatory protein P-II (glnB).